Here is a 276-residue protein sequence, read N- to C-terminus: Exosome complex component RRP43 (276 aa).

Ala-2 is modified (N-acetylalanine).

It belongs to the RNase PH family. Component of the RNA exosome core complex (Exo-9), composed of EXOSC1, EXOSC2, EXOSC3, EXOSC4, EXOSC5, EXOSC6, EXOSC7, EXOSC8 and EXOSC9; within the complex interacts with EXOSC5 and EXOSC6. The catalytically inactive RNA exosome core complex (Exo-9) associates with the catalytic subunit EXOSC10/RRP6. Exo-9 may associate with DIS3 to form the nucleolar exosome complex, or DIS3L to form the cytoplasmic exosome complex. Exo-9 is formed by a hexameric base ring consisting of the heterodimers EXOSC4-EXOSC9, EXOSC5-EXOSC8 and EXOSC6-EXOSC7, and a cap ring consisting of EXOSC1, EXOSC2 and EXOSC3. The RNA exosome complex associates with cofactors C1D/RRP47, MPHOSPH6/MPP6 and MTREX/MTR4.

It is found in the cytoplasm. The protein resides in the nucleus. Its subcellular location is the nucleolus. Its function is as follows. Non-catalytic component of the RNA exosome complex which has 3'-&gt;5' exoribonuclease activity and participates in a multitude of cellular RNA processing and degradation events. In the nucleus, the RNA exosome complex is involved in proper maturation of stable RNA species such as rRNA, snRNA and snoRNA, in the elimination of RNA processing by-products and non-coding 'pervasive' transcripts, such as antisense RNA species and promoter-upstream transcripts (PROMPTs), and of mRNAs with processing defects, thereby limiting or excluding their export to the cytoplasm. The RNA exosome may be involved in Ig class switch recombination (CSR) and/or Ig variable region somatic hypermutation (SHM) by targeting AICDA deamination activity to transcribed dsDNA substrates. In the cytoplasm, the RNA exosome complex is involved in general mRNA turnover and specifically degrades inherently unstable mRNAs containing AU-rich elements (AREs) within their 3' untranslated regions, and in RNA surveillance pathways, preventing translation of aberrant mRNAs. It seems to be involved in degradation of histone mRNA. The catalytic inactive RNA exosome core complex of 9 subunits (Exo-9) is proposed to play a pivotal role in the binding and presentation of RNA for ribonucleolysis, and to serve as a scaffold for the association with catalytic subunits and accessory proteins or complexes. EXOSC8 binds to ARE-containing RNAs. The polypeptide is Exosome complex component RRP43 (Exosc8) (Mus musculus (Mouse)).